The sequence spans 103 residues: uncharacterized protein (103 aa).

The tract at residues 1–103 (MAGARRRARC…WRGGSCTSQR (103 aa)) is disordered. Over residues 35 to 44 (GSGQPRWWPW) the composition is skewed to low complexity. Basic residues-rich tracts occupy residues 55 to 65 (RRPGPGRRARS) and 74 to 84 (RPPHSRTRARR).

Belongs to the epstein-barr virus RPMS1 family.

This is an uncharacterized protein from Homo sapiens (Human).